The sequence spans 507 residues: Phosphoprotein (507 aa).

A disordered region spans residues 56 to 79 (DHQDISKPCFPAAGPGKSSMSRCH). Ser-86 and Ser-151 each carry phosphoserine. Positions 137 to 160 (DGVEVWGGDEESENSDVDSGEPDP) are enriched in acidic residues. Positions 137–307 (DGVEVWGGDE…QSNIEPEDDY (171 aa)) are disordered. Composition is skewed to basic and acidic residues over residues 189 to 199 (EIQKLLEDQSR) and 222 to 233 (TASEKPIKKGTD). 2 stretches are compositionally biased toward low complexity: residues 236-252 (STSS…GGAT) and 266-278 (NASA…SASN). Residues 279–301 (VSPTQGSKTESGTTTSRISQSNI) show a composition bias toward polar residues. The multimerization stretch occupies residues 304–376 (EDDYDDELFS…LSSFMIAIPG (73 aa)). The segment at 459 to 507 (ASRSVIRSIIKSSHLGEDRKDYLMSLLNDIQGSKDLAQFHQMLVKILKN) is interaction with the nucleocapsid (N-RNA).

It belongs to the morbillivirus P protein family. As to quaternary structure, homotetramer. Interacts (via multimerization domain) with polymerase L; this interaction forms the polymerase L-P complex. Interacts (via N-terminus) with N0 (via Ncore); this interaction allows P to chaperon N0 to avoid N polymerization before encapsidation. Interacts (via C-terminus) with N-RNA template; this interaction positions the polymerase on the template for both transcription and replication. Post-translationally, phosphorylation on serines by host CK2 is necessary for the formation of viral factories.

Its function is as follows. Essential cofactor of the RNA polymerase L that plays a central role in the transcription and replication by forming the polymerase complex with RNA polymerase L and recruiting L to the genomic N-RNA template for RNA synthesis. Also plays a central role in the encapsidation of nascent RNA chains by forming the encapsidation complex with the nucleocapsid protein N (N-P complex). Acts as a chaperone for newly synthesized free N protein, so-called N0, allowing encapsidation of nascent RNA chains during replication. The nucleoprotein protein N prevents excessive phosphorylation of P, which leads to down-regulation of viral transcription/ replication. Participates, together with N, in the formation of viral factories (viroplasms), which are large inclusions in the host cytoplasm where replication takes place. In Bos indicus (Zebu), this protein is Phosphoprotein (P/V).